A 191-amino-acid polypeptide reads, in one-letter code: Fe/S biogenesis protein NfuA (191 aa).

Residues cysteine 149 and cysteine 152 each contribute to the [4Fe-4S] cluster site.

The protein belongs to the NfuA family. As to quaternary structure, homodimer. [4Fe-4S] cluster serves as cofactor.

In terms of biological role, involved in iron-sulfur cluster biogenesis. Binds a 4Fe-4S cluster, can transfer this cluster to apoproteins, and thereby intervenes in the maturation of Fe/S proteins. Could also act as a scaffold/chaperone for damaged Fe/S proteins. The protein is Fe/S biogenesis protein NfuA of Citrobacter koseri (strain ATCC BAA-895 / CDC 4225-83 / SGSC4696).